Consider the following 137-residue polypeptide: Large ribosomal subunit protein uL16 (137 aa).

It belongs to the universal ribosomal protein uL16 family. Part of the 50S ribosomal subunit.

Its function is as follows. Binds 23S rRNA and is also seen to make contacts with the A and possibly P site tRNAs. This chain is Large ribosomal subunit protein uL16, found in Bartonella bacilliformis (strain ATCC 35685 / KC583 / Herrer 020/F12,63).